The sequence spans 191 residues: uncharacterized protein (191 aa).

Residues 1–17 form the signal peptide; sequence MESIILSIAIFIGVLLG. The disordered stretch occupies residues 82–148; it reads TFSGSRTSPD…DVGAGSGSSI (67 aa). The helical transmembrane segment at 168-188 threads the bilayer; that stretch reads VAVLITAAILSAPVTAIALLE.

The protein resides in the membrane. This is an uncharacterized protein from Saccharomyces cerevisiae (strain ATCC 204508 / S288c) (Baker's yeast).